Here is a 465-residue protein sequence, read N- to C-terminus: MTQRVRTRFAPSPTGFIHLGNIRSAFYPWAFARRMKGDFILRIEDTDVERSTDVAVDVILESMAWLDLDIDEGPFYQMQRMDRYREVVQQMLDNELAYHCYMSTEELDALREAQRAAGEKPRYNGFWRPEPGKVLPEPPAGVQPVVRFKNPIGGSVVWDDAVKGRIEISNDELDDLVIARPDGTPTYNFCVVVDDLDMKITHVIRGDDHVNNTPRQINIIRALGGEVPVYAHLPTVLNEQGEKMSKRHGALPVTGYRDEGYLPEAVLNYLARLGWAHGDAEIFSREQFVEWFDLEHLGKSPAQYNPEKLAWLNNHYIKVGDNTRLADLTRPFIEALGGKVEGANLVDVIALVKDRANTLKEVAQTAMLFYRGEPQADAALKAEHLTDEIRPALQALATQLAALPEWKREAISAAFKAVLAEFGLKMPKLAMPVRLLVAGQLQTPSIDAVLELFGRDTVLRRLAAA.

Positions 11–21 match the 'HIGH' region motif; that stretch reads PSPTGFIHLGN. The 'KMSKS' region motif lies at 243–247; it reads KMSKR. Position 246 (K246) interacts with ATP.

This sequence belongs to the class-I aminoacyl-tRNA synthetase family. Glutamate--tRNA ligase type 1 subfamily. In terms of assembly, monomer.

It is found in the cytoplasm. The enzyme catalyses tRNA(Glu) + L-glutamate + ATP = L-glutamyl-tRNA(Glu) + AMP + diphosphate. Its function is as follows. Catalyzes the attachment of glutamate to tRNA(Glu) in a two-step reaction: glutamate is first activated by ATP to form Glu-AMP and then transferred to the acceptor end of tRNA(Glu). This chain is Glutamate--tRNA ligase, found in Cupriavidus metallidurans (strain ATCC 43123 / DSM 2839 / NBRC 102507 / CH34) (Ralstonia metallidurans).